Reading from the N-terminus, the 362-residue chain is Chromobox protein homolog 8 (362 aa).

Residues 11-69 enclose the Chromo domain; it reads FAAEALLKRRIRKGRMEYLVKWKGWSQKYSTWEPEENILDARLLAAFEEREREMELYGP. The span at 90-100 shows a compositional bias: basic and acidic residues; sequence KTYEFRSDSTR. The interval 90–197 is disordered; that stretch reads KTYEFRSDST…LGEPSAGLGE (108 aa). Ser-110 carries the post-translational modification Phosphoserine. A compositionally biased stretch (basic and acidic residues) spans 142-162; the sequence is DPPRDRDRERDRGTSRVDDKP. Ser-164 and Ser-229 each carry phosphoserine. Residue Tyr-234 is modified to Phosphotyrosine. Phosphoserine occurs at positions 238, 284, 305, and 325.

As to quaternary structure, component of a PRC1-like complex. Interacts with RING1, RNF2, PCGF1, PCGF2, PCGF3, BMI1, PCGF5, PCGF6 and PHC2. Interacts with histone H3. Interacts with MLLT3. Interacts with PHC2. Interacts (via chromodomain) with single-stranded RNA.

It is found in the nucleus. It localises to the chromosome. In terms of biological role, component of a Polycomb group (PcG) multiprotein PRC1-like complex, a complex class required to maintain the transcriptionally repressive state of many genes, including Hox genes, throughout development. PcG PRC1 complex acts via chromatin remodeling and modification of histones; it mediates monoubiquitination of histone H2A 'Lys-119', rendering chromatin heritably changed in its expressibility. The chain is Chromobox protein homolog 8 (Cbx8) from Mus musculus (Mouse).